The following is a 145-amino-acid chain: 3-hydroxyacyl-[acyl-carrier-protein] dehydratase FabZ (145 aa).

Histidine 48 is a catalytic residue.

This sequence belongs to the thioester dehydratase family. FabZ subfamily.

The protein localises to the cytoplasm. The catalysed reaction is a (3R)-hydroxyacyl-[ACP] = a (2E)-enoyl-[ACP] + H2O. Involved in unsaturated fatty acids biosynthesis. Catalyzes the dehydration of short chain beta-hydroxyacyl-ACPs and long chain saturated and unsaturated beta-hydroxyacyl-ACPs. This Stutzerimonas stutzeri (strain A1501) (Pseudomonas stutzeri) protein is 3-hydroxyacyl-[acyl-carrier-protein] dehydratase FabZ.